A 354-amino-acid chain; its full sequence is MAIDENKQKALAAALGQIEKQFGKGSIMRLGEDRSMDVETISTGSLSLDIALGAGGLPMGRIVEIYGPESSGKTTLTLQVIAAAQREGKTCAFIDAEHALDPIYARKLGVDIDNLLCSQPDTGEQALEICDALARSGAVDVIVVDSVAALTPKAEIEGEIGDSHMGLAARMMSQAMRKLAGNLKQSNTLLIFINQIRMKIGVMFGNPETTTGGNALKFYASVRLDIRRIGAVKEGENVVGSETRVKVVKNKIAAPFKQAEFQILYGEGINFYGELVDLGVKEKLIEKAGAWYSYNGEKIGQGKANATAWLKENPATAKEIEKKVRELLLSNQDSTPDFSVDDNGEGVKETNEDF.

67 to 74 (GPESSGKT) contacts ATP. Positions 331–354 (NQDSTPDFSVDDNGEGVKETNEDF) are disordered. Over residues 345–354 (EGVKETNEDF) the composition is skewed to basic and acidic residues.

It belongs to the RecA family.

It localises to the cytoplasm. In terms of biological role, can catalyze the hydrolysis of ATP in the presence of single-stranded DNA, the ATP-dependent uptake of single-stranded DNA by duplex DNA, and the ATP-dependent hybridization of homologous single-stranded DNAs. It interacts with LexA causing its activation and leading to its autocatalytic cleavage. The sequence is that of Protein RecA from Citrobacter koseri (strain ATCC BAA-895 / CDC 4225-83 / SGSC4696).